Here is a 241-residue protein sequence, read N- to C-terminus: Probable 2-phosphosulfolactate phosphatase (241 aa).

It belongs to the ComB family. It depends on Mg(2+) as a cofactor.

The enzyme catalyses (2R)-O-phospho-3-sulfolactate + H2O = (2R)-3-sulfolactate + phosphate. The protein is Probable 2-phosphosulfolactate phosphatase of Gloeothece citriformis (strain PCC 7424) (Cyanothece sp. (strain PCC 7424)).